Reading from the N-terminus, the 132-residue chain is U11/U12 small nuclear ribonucleoprotein 25 kDa protein (132 aa).

Residues 41–132 (MTVRVCKMDG…VSFIKKLRQK (92 aa)) form the Ubiquitin-like domain.

As to quaternary structure, component of the U11/U12 snRNPs that are part of the U12-type spliceosome.

The protein resides in the nucleus. The sequence is that of U11/U12 small nuclear ribonucleoprotein 25 kDa protein (SNRNP25) from Homo sapiens (Human).